The primary structure comprises 956 residues: MAM domain-containing glycosylphosphatidylinositol anchor protein 1 (956 aa).

Positions 1–18 (MEVTCLLLLALIPFHCRG) are cleaved as a signal peptide. Ig-like domains follow at residues 24–123 (PAQA…KSIR) and 132–230 (PVLT…KAIT). An N-linked (GlcNAc...) asparagine glycan is attached at Asn-42. Intrachain disulfides connect Cys-60-Cys-108 and Cys-157-Cys-214. N-linked (GlcNAc...) asparagine glycosylation is found at Asn-235, Asn-247, Asn-257, and Asn-307. Ig-like domains lie at 240-323 (PALK…KTVN), 338-432 (PDMI…IEVN), 440-532 (PTIS…AQVQ), and 539-650 (PEVE…PTRS). Disulfide bonds link Cys-262–Cys-308 and Cys-357–Cys-415. An N-linked (GlcNAc...) asparagine glycan is attached at Asn-432. 2 disulfide bridges follow: Cys-463-Cys-514 and Cys-560-Cys-616. The Fibronectin type-III domain maps to 627 to 744 (CLFQVSAKAY…SRIIHYTEPI (118 aa)). One can recognise an MAM domain in the interval 752 to 919 (NTCHFEDEKI…VTLKKGECPR (168 aa)). Polar residues predominate over residues 780–789 (LTQNPKRSPN). Positions 780–799 (LTQNPKRSPNTGPPTDISGT) are disordered. A lipid anchor (GPI-anchor amidated serine) is attached at Ser-933. Residues 934–956 (GAPRLSSLQLWGSMAIFLLALQR) constitute a propeptide, removed in mature form.

As to quaternary structure, interacts heterophilically through its MAM domain with proteins in axon-rich regions and through its Ig-like domains with proteins in differentiating muscle. Interacts (through the Ig-like domains) with NLGN2. In terms of tissue distribution, expressed by neurons in layers 2 and 3 of the cortex during their migration and settling in the cortical plate. Also found in layers 4 and 6a. From 9.5 dpc-13.5 dpc, detected in the marginal zone of the developing cortex. At 16.5 dpc, modest expression is found in the intermediate zone. At postnatal day 1, evident in the superficial cortical plate. By postnatal day 7, expression is limited to layers 2 and 3 throughout most of the cortex.

Its subcellular location is the cell membrane. Functionally, required for radial migration of cortical neurons in the superficial layer of the neocortex. Plays a role in the formation or maintenance of inhibitory synapses. May function by inhibiting the activity of NLGN2. The protein is MAM domain-containing glycosylphosphatidylinositol anchor protein 1 of Mus musculus (Mouse).